Reading from the N-terminus, the 290-residue chain is 33 kDa chaperonin (290 aa).

Intrachain disulfides connect Cys-235–Cys-237 and Cys-268–Cys-271.

This sequence belongs to the HSP33 family. Post-translationally, under oxidizing conditions two disulfide bonds are formed involving the reactive cysteines. Under reducing conditions zinc is bound to the reactive cysteines and the protein is inactive.

Its subcellular location is the cytoplasm. In terms of biological role, redox regulated molecular chaperone. Protects both thermally unfolding and oxidatively damaged proteins from irreversible aggregation. Plays an important role in the bacterial defense system toward oxidative stress. The sequence is that of 33 kDa chaperonin from Streptococcus pyogenes serotype M4 (strain MGAS10750).